We begin with the raw amino-acid sequence, 213 residues long: Proteasome subunit beta (213 aa).

Positions 1 to 11 are cleaved as a propeptide — removed in mature form; by autocatalysis; the sequence is MSMIEEKIYKG. Thr12 serves as the catalytic Nucleophile.

It belongs to the peptidase T1B family. In terms of assembly, the 20S proteasome core is composed of 14 alpha and 14 beta subunits that assemble into four stacked heptameric rings, resulting in a barrel-shaped structure. The two inner rings, each composed of seven catalytic beta subunits, are sandwiched by two outer rings, each composed of seven alpha subunits. The catalytic chamber with the active sites is on the inside of the barrel. Has probably a gated structure, the ends of the cylinder being occluded by the N-termini of the alpha-subunits. Is likely capped at one or both ends by the proteasome regulatory ATPase, PAN.

It localises to the cytoplasm. The catalysed reaction is Cleavage of peptide bonds with very broad specificity.. With respect to regulation, the formation of the proteasomal ATPase PAN-20S proteasome complex, via the docking of the C-termini of PAN into the intersubunit pockets in the alpha-rings, triggers opening of the gate for substrate entry. Interconversion between the open-gate and close-gate conformations leads to a dynamic regulation of the 20S proteasome proteolysis activity. Functionally, component of the proteasome core, a large protease complex with broad specificity involved in protein degradation. This Archaeoglobus fulgidus (strain ATCC 49558 / DSM 4304 / JCM 9628 / NBRC 100126 / VC-16) protein is Proteasome subunit beta.